The following is a 387-amino-acid chain: Adaptive-response sensory kinase SasA (387 aa).

The interval 1–97 (MGESLSPQAL…TDQLANQLPQ (97 aa)) is interacts with KaiC. The region spanning 158–382 (LVAHDLRNPL…TFHFTMPVYR (225 aa)) is the Histidine kinase domain. Position 161 is a phosphohistidine; by autocatalysis (His-161).

In terms of assembly, homooligomerizes. Part of the circadian clock (KaiA, KaiB, KaiC, CikA, RpaA, SasA), the composition of which varies during the circadian cycle. Binds to the CI domain of KaiC; KaiB(fs) and SasA compete for the binding site. Binds preferentially to doubly phosphorylated KaiC. Interacts with LdpA. Post-translationally, autophosphorylates in vitro.

The catalysed reaction is ATP + protein L-histidine = ADP + protein N-phospho-L-histidine.. Its function is as follows. Member of the two-component regulatory system SasA/RpaA involved in genome-wide circadian gene expression. One of three clock output pathways. Participates in the KaiABC clock protein complex, which constitutes the main circadian regulator in cyanobacteria, via its interaction with KaiC. Required for robustness of the circadian rhythm of gene expression and involved in clock output. KaiC enhances the autophosphorylation activity of SasA, which then transfers its phosphate group to RpaA to activate it. Phosphotransfer is maximal when KaiC phosphorylation is active during the circadian cycle; this two-component system is activated by fully phosphorylated KaiC. A very robust clock is reconstituted with KaiA, KaiB, KaiC, SasA, CikA and RpaA; output is measured by transcription from an appropriate reporter. In addition to its output function, recruits fold-shifted KaiB (KaiB(fs)) to KaiC to cooperatively form the KaiB(6):KaiC(6) complex (independent of SasA kinase activity); at physiological concentrations increases their association. At higher concentrations SasA and KaiB(fs) compete to bind to KaiC. Mutations that decrease cooperativity nearly phenocopy a deletion mutation. Autophosphorylation and phosphotransfer activities are not essential for clock rhythms in continuous light, but they are essential for adaptation to light/dark cycles. The chain is Adaptive-response sensory kinase SasA from Synechococcus elongatus (strain ATCC 33912 / PCC 7942 / FACHB-805) (Anacystis nidulans R2).